The sequence spans 298 residues: Inosose dehydratase (298 aa).

This sequence belongs to the IolE/MocC family. It depends on glutathione as a cofactor. Co(2+) is required as a cofactor. The cofactor is Mn(2+).

The enzyme catalyses scyllo-inosose = 3D-3,5/4-trihydroxycyclohexane-1,2-dione + H2O. It functions in the pathway polyol metabolism; myo-inositol degradation into acetyl-CoA; acetyl-CoA from myo-inositol: step 2/7. Catalyzes the dehydration of inosose (2-keto-myo-inositol, 2KMI or 2,4,6/3,5-pentahydroxycyclohexanone) to 3D-(3,5/4)-trihydroxycyclohexane-1,2-dione (D-2,3-diketo-4-deoxy-epi-inositol). The sequence is that of Inosose dehydratase from Clostridium beijerinckii (strain ATCC 51743 / NCIMB 8052) (Clostridium acetobutylicum).